The primary structure comprises 236 residues: Dual specificity protein phosphatase 15 (236 aa).

Residue G2 is the site of N-myristoyl glycine attachment. Residues 4 to 144 form the Tyrosine-protein phosphatase domain; that stretch reads GMTKVLPGLY…LEEFGWANSQ (141 aa). C88 (phosphocysteine intermediate) is an active-site residue. Residues 178–213 are disordered; sequence GPGTSAPSATTASSAASEGTLQRLVPRSPRESHRPL. Residues 181–194 are compositionally biased toward low complexity; it reads TSAPSATTASSAAS.

This sequence belongs to the protein-tyrosine phosphatase family. Non-receptor class dual specificity subfamily.

It is found in the cell membrane. The enzyme catalyses O-phospho-L-tyrosyl-[protein] + H2O = L-tyrosyl-[protein] + phosphate. It catalyses the reaction O-phospho-L-seryl-[protein] + H2O = L-seryl-[protein] + phosphate. It carries out the reaction O-phospho-L-threonyl-[protein] + H2O = L-threonyl-[protein] + phosphate. Its function is as follows. May play a role in the regulation of oligodendrocyte differentiation. May play a role in the regulation of myelin formation. Involved in the regulation of Erk1/2 phosphorylation in Schwann cells; the signaling may be linked to the regulation of myelination. May dephosphorylate MAPK13, ATF2, ERBB3, PDGFRB and SNX6. This Rattus norvegicus (Rat) protein is Dual specificity protein phosphatase 15 (Dusp15).